The chain runs to 508 residues: Lysine--tRNA ligase (508 aa).

Residues E418 and E425 each coordinate Mg(2+).

This sequence belongs to the class-II aminoacyl-tRNA synthetase family. As to quaternary structure, homodimer. The cofactor is Mg(2+).

Its subcellular location is the cytoplasm. It catalyses the reaction tRNA(Lys) + L-lysine + ATP = L-lysyl-tRNA(Lys) + AMP + diphosphate. This Burkholderia vietnamiensis (strain G4 / LMG 22486) (Burkholderia cepacia (strain R1808)) protein is Lysine--tRNA ligase.